A 236-amino-acid polypeptide reads, in one-letter code: Probable apoptosis inhibitor 2 (236 aa).

Residues arginine 85–arginine 150 form a BIR repeat. Zn(2+) contacts are provided by cysteine 123, cysteine 126, histidine 142, and cysteine 146. The RING-type zinc finger occupies cysteine 189–cysteine 223.

This chain is Probable apoptosis inhibitor 2 (IAP2), found in Orgyia pseudotsugata multicapsid polyhedrosis virus (OpMNPV).